The sequence spans 364 residues: DNA replication and repair protein RecF (364 aa).

Residue 30 to 37 coordinates ATP; the sequence is GENGSGKT.

This sequence belongs to the RecF family.

The protein resides in the cytoplasm. The RecF protein is involved in DNA metabolism; it is required for DNA replication and normal SOS inducibility. RecF binds preferentially to single-stranded, linear DNA. It also seems to bind ATP. The protein is DNA replication and repair protein RecF of Xylella fastidiosa (strain M23).